The chain runs to 662 residues: DNA topoisomerase 4 subunit B (662 aa).

Residues Tyr20, Asn60, Asp87, 129-135, and Lys359 each bind ATP; that span reads GLHGVGI. One can recognise a Toprim domain in the interval 439–553; it reads TELFIVEGDS…EGHLYLAKPP (115 aa). Residues Glu445, Asp518, and Asp520 each contribute to the Mg(2+) site.

It belongs to the type II topoisomerase family. ParE type 1 subfamily. Heterotetramer composed of ParC and ParE. It depends on Mg(2+) as a cofactor. Mn(2+) serves as cofactor. Requires Ca(2+) as cofactor.

It catalyses the reaction ATP-dependent breakage, passage and rejoining of double-stranded DNA.. Functionally, topoisomerase IV is essential for chromosome segregation. It relaxes supercoiled DNA. Performs the decatenation events required during the replication of a circular DNA molecule. The sequence is that of DNA topoisomerase 4 subunit B from Rickettsia conorii (strain ATCC VR-613 / Malish 7).